A 287-amino-acid polypeptide reads, in one-letter code: Probable prolyl 4-hydroxylase 3 (287 aa).

Over 1–16 (MAKLRHSRFQARKWST) the chain is Cytoplasmic. Residues 17 to 37 (LMLVLFMLFMLTIVLLMLLAF) form a helical; Signal-anchor for type II membrane protein membrane-spanning segment. The Lumenal portion of the chain corresponds to 38–287 (GVFSLPINND…KWMHVGEYKI (250 aa)). The Fe2OG dioxygenase domain maps to 159–282 (HGEGLQVLHY…KWSSTKWMHV (124 aa)). Fe cation contacts are provided by His-177 and Asp-179. Asn-218 carries an N-linked (GlcNAc...) asparagine glycan. Position 263 (His-263) interacts with Fe cation. A 2-oxoglutarate-binding site is contributed by Lys-273.

It belongs to the P4HA family. It depends on Fe(2+) as a cofactor. Requires L-ascorbate as cofactor.

Its subcellular location is the endoplasmic reticulum membrane. It carries out the reaction L-prolyl-[collagen] + 2-oxoglutarate + O2 = trans-4-hydroxy-L-prolyl-[collagen] + succinate + CO2. Catalyzes the post-translational formation of 4-hydroxyproline in -Xaa-Pro-Gly- sequences in proline-rich peptide sequences of plant glycoproteins and other proteins. Hydroxyprolines are important constituent of many plant cell wall glycoproteins such as extensins, hydroxyproline-rich glycoproteins, lectins and arabinogalactan proteins. This Arabidopsis thaliana (Mouse-ear cress) protein is Probable prolyl 4-hydroxylase 3.